Consider the following 529-residue polypeptide: Ribonuclease Y (529 aa).

The chain crosses the membrane as a helical span at residues 4–24 (GLIYISLEVLVACLITALIMY). Residues 216–297 (LTSRIALPCS…NRIEEVYHRV (82 aa)) form the KH domain. Positions 342 to 435 (ALQHSKEVAL…VCAADALSAG (94 aa)) constitute an HD domain.

Belongs to the RNase Y family.

It localises to the cell membrane. Endoribonuclease that initiates mRNA decay. The protein is Ribonuclease Y of Helicobacter pylori (strain J99 / ATCC 700824) (Campylobacter pylori J99).